Reading from the N-terminus, the 196-residue chain is GTP cyclohydrolase-2 (196 aa).

Residue 49-53 participates in GTP binding; sequence RVHSE. Zn(2+) is bound by residues Cys-54, Cys-65, and Cys-67. Residues Gln-70, 92 to 94, and Thr-114 each bind GTP; that span reads EGR. Asp-126 acts as the Proton acceptor in catalysis. Arg-128 acts as the Nucleophile in catalysis. Residues Thr-149 and Lys-154 each contribute to the GTP site.

Belongs to the GTP cyclohydrolase II family. In terms of assembly, homodimer. Requires Zn(2+) as cofactor.

The enzyme catalyses GTP + 4 H2O = 2,5-diamino-6-hydroxy-4-(5-phosphoribosylamino)-pyrimidine + formate + 2 phosphate + 3 H(+). It participates in cofactor biosynthesis; riboflavin biosynthesis; 5-amino-6-(D-ribitylamino)uracil from GTP: step 1/4. Functionally, catalyzes the conversion of GTP to 2,5-diamino-6-ribosylamino-4(3H)-pyrimidinone 5'-phosphate (DARP), formate and pyrophosphate. This is GTP cyclohydrolase-2 from Escherichia coli O127:H6 (strain E2348/69 / EPEC).